A 122-amino-acid chain; its full sequence is Large ribosomal subunit protein uL14 (122 aa).

Belongs to the universal ribosomal protein uL14 family. In terms of assembly, part of the 50S ribosomal subunit. Forms a cluster with proteins L3 and L19. In the 70S ribosome, L14 and L19 interact and together make contacts with the 16S rRNA in bridges B5 and B8.

Its function is as follows. Binds to 23S rRNA. Forms part of two intersubunit bridges in the 70S ribosome. The polypeptide is Large ribosomal subunit protein uL14 (Parafrankia sp. (strain EAN1pec)).